Here is a 341-residue protein sequence, read N- to C-terminus: Phenylalanine--tRNA ligase alpha subunit (341 aa).

Glu-256 lines the Mg(2+) pocket.

It belongs to the class-II aminoacyl-tRNA synthetase family. Phe-tRNA synthetase alpha subunit type 1 subfamily. As to quaternary structure, tetramer of two alpha and two beta subunits. Requires Mg(2+) as cofactor.

It is found in the cytoplasm. It catalyses the reaction tRNA(Phe) + L-phenylalanine + ATP = L-phenylalanyl-tRNA(Phe) + AMP + diphosphate + H(+). The protein is Phenylalanine--tRNA ligase alpha subunit of Leptospira interrogans serogroup Icterohaemorrhagiae serovar Lai (strain 56601).